Consider the following 886-residue polypeptide: Kinesin-like protein KIF18A (886 aa).

In terms of domain architecture, Kinesin motor spans 11 to 355; it reads RMKVVVRVRP…LKYANRAKEI (345 aa). Residue Lys-24 forms a Glycyl lysine isopeptide (Lys-Gly) (interchain with G-Cter in SUMO2) linkage. 113 to 120 serves as a coordination point for ATP; that stretch reads GATGSGKT. The stretch at 370–404 forms a coiled coil; sequence ISQYVKICNMQKAEILMLKEKLKAYEEQKALSDRN. Residue Ser-674 is modified to Phosphoserine. Lys-683 participates in a covalent cross-link: Glycyl lysine isopeptide (Lys-Gly) (interchain with G-Cter in SUMO2). Ser-695 carries the phosphoserine modification. The segment at 774–804 is disordered; sequence EQEPLASSKSSVHRIESSSFSTKDSMPESAG. Residue Lys-782 forms a Glycyl lysine isopeptide (Lys-Gly) (interchain with G-Cter in SUMO2) linkage. Ser-826 bears the Phosphoserine mark. Lys-862 is covalently cross-linked (Glycyl lysine isopeptide (Lys-Gly) (interchain with G-Cter in SUMO2)). Positions 862-886 are disordered; that stretch reads KRNTNKTNSNMLRKFRRNTSKENVQ.

It belongs to the TRAFAC class myosin-kinesin ATPase superfamily. Kinesin family. As to quaternary structure, interacts with CENPE and ESR1. Post-translationally, glycosylated. In terms of processing, ubiquitinated.

It is found in the cell projection. The protein localises to the ruffle. It localises to the cytoplasm. The protein resides in the nucleus. Its subcellular location is the cytoskeleton. It is found in the microtubule organizing center. The protein localises to the centrosome. Functionally, microtubule-depolymerizing kinesin which plays a role in chromosome congression by reducing the amplitude of preanaphase oscillations and slowing poleward movement during anaphase, thus suppressing chromosome movements. May stabilize the CENPE-BUB1B complex at the kinetochores during early mitosis and maintains CENPE levels at kinetochores during chromosome congression. The polypeptide is Kinesin-like protein KIF18A (Kif18a) (Mus musculus (Mouse)).